We begin with the raw amino-acid sequence, 276 residues long: N-alpha-acetyltransferase 60 (276 aa).

The N-acetyltransferase domain occupies Val34–Tyr239. Tyr59 contacts substrate. The active site involves Tyr139. Leu141 contributes to the substrate binding site. Acetyl-CoA contacts are provided by residues Leu143 to Val145 and Arg151 to Ser156. His180 is an active-site residue. Residues Asn185 and Tyr192–Arg195 contribute to the acetyl-CoA site. The required for homodimerization stretch occupies residues Pro204–Asp215. Position 207 (Tyr207) interacts with substrate.

The protein belongs to the acetyltransferase family. NAA60 subfamily.

The enzyme catalyses N-terminal L-methionyl-[transmembrane protein] + acetyl-CoA = N-terminal N(alpha)-acetyl-L-methionyl-[transmembrane protein] + CoA + H(+). It carries out the reaction L-lysyl-[protein] + acetyl-CoA = N(6)-acetyl-L-lysyl-[protein] + CoA + H(+). Its function is as follows. Displays alpha (N-terminal) acetyltransferase activity towards a range of N-terminal sequences including those starting with Met-Lys, Met-Val, Met-Ala and Met-Met. Required for normal chromosomal segregation during anaphase. Shows histone acetyltransferase activity toward free histones. In terms of biological role, does not show histone acetyltransferase activity toward free histones. In Drosophila melanogaster (Fruit fly), this protein is N-alpha-acetyltransferase 60.